Here is a 263-residue protein sequence, read N- to C-terminus: MKNAFKDALKAGRPQIGLWLGLANSYSAELLAGAGFDWLLIDGEHAPNNVQTVLTQLQAIAPYPSQPVVRPSWNDPVQIKQLLDVGAQTLLIPMVQNADEARNAVAATRYPPAGIRGVGSALARASRWNRIPDYLHLANDAMCVLVQIETREAMSNLASILDVDGIDGVFIGPADLSADMGFAGNPQHPEVQAAIENAIVQIRAAGKAPGILMANEALAKRYLELGALFVAVGVDTTLLARGAEALAARFGAEKNLSGASGVY.

Catalysis depends on His45, which acts as the Proton acceptor. Gln147 is a substrate binding site. Glu149 contributes to the a divalent metal cation binding site. Ala174 and Asp175 together coordinate substrate. A divalent metal cation is bound at residue Asp175.

It belongs to the HpcH/HpaI aldolase family. In terms of assembly, homohexamer; trimer of dimers. It depends on a divalent metal cation as a cofactor.

The enzyme catalyses 4-hydroxy-2-oxoheptanedioate = succinate semialdehyde + pyruvate. Its pathway is aromatic compound metabolism; 4-hydroxyphenylacetate degradation; pyruvate and succinate semialdehyde from 4-hydroxyphenylacetate: step 7/7. In terms of biological role, catalyzes the reversible retro-aldol cleavage of 4-hydroxy-2-ketoheptane-1,7-dioate (HKHD) to pyruvate and succinic semialdehyde. The sequence is that of 4-hydroxy-2-oxo-heptane-1,7-dioate aldolase from Salmonella paratyphi A (strain ATCC 9150 / SARB42).